A 417-amino-acid chain; its full sequence is 4-hydroxy-3-methylbut-2-en-1-yl diphosphate synthase (flavodoxin) (417 aa).

Positions 304, 307, 350, and 357 each coordinate [4Fe-4S] cluster.

Belongs to the IspG family. The cofactor is [4Fe-4S] cluster.

It carries out the reaction (2E)-4-hydroxy-3-methylbut-2-enyl diphosphate + oxidized [flavodoxin] + H2O + 2 H(+) = 2-C-methyl-D-erythritol 2,4-cyclic diphosphate + reduced [flavodoxin]. It functions in the pathway isoprenoid biosynthesis; isopentenyl diphosphate biosynthesis via DXP pathway; isopentenyl diphosphate from 1-deoxy-D-xylulose 5-phosphate: step 5/6. Functionally, converts 2C-methyl-D-erythritol 2,4-cyclodiphosphate (ME-2,4cPP) into 1-hydroxy-2-methyl-2-(E)-butenyl 4-diphosphate. This is 4-hydroxy-3-methylbut-2-en-1-yl diphosphate synthase (flavodoxin) from Rhizobium meliloti (strain 1021) (Ensifer meliloti).